Here is a 174-residue protein sequence, read N- to C-terminus: Trypsin inhibitor BvTI (174 aa).

Intrachain disulfides connect C41–C84 and C131–C138.

It belongs to the protease inhibitor I3 (leguminous Kunitz-type inhibitor) family.

It is found in the secreted. Inhibits bovine trypsin and chymotrypsin, and human plasmin, plasma kallikrein and factor XIIa. The polypeptide is Trypsin inhibitor BvTI (Bauhinia variegata (Purple orchid tree)).